We begin with the raw amino-acid sequence, 301 residues long: uncharacterized protein (301 aa).

Residues Ser44 and Tyr107 each act as charge relay system in the active site. The active-site Proton donor is Tyr133. Residue Lys162 is the Schiff-base intermediate with substrate of the active site.

Belongs to the DapA family. Homotetramer.

It localises to the cytoplasm. This is an uncharacterized protein from Pyrobaculum neutrophilum (strain DSM 2338 / JCM 9278 / NBRC 100436 / V24Sta) (Thermoproteus neutrophilus).